A 196-amino-acid chain; its full sequence is ATP-dependent Clp protease proteolytic subunit (196 aa).

The active-site Nucleophile is S101. The active site involves H126.

Belongs to the peptidase S14 family. Component of the chloroplastic Clp protease core complex.

The protein localises to the plastid. It localises to the chloroplast stroma. The catalysed reaction is Hydrolysis of proteins to small peptides in the presence of ATP and magnesium. alpha-casein is the usual test substrate. In the absence of ATP, only oligopeptides shorter than five residues are hydrolyzed (such as succinyl-Leu-Tyr-|-NHMec, and Leu-Tyr-Leu-|-Tyr-Trp, in which cleavage of the -Tyr-|-Leu- and -Tyr-|-Trp bonds also occurs).. In terms of biological role, cleaves peptides in various proteins in a process that requires ATP hydrolysis. Has a chymotrypsin-like activity. Plays a major role in the degradation of misfolded proteins. The polypeptide is ATP-dependent Clp protease proteolytic subunit (Lactuca sativa (Garden lettuce)).